Reading from the N-terminus, the 281-residue chain is MAQKIIRVGDIEIANDKPMVLFGGMNVLESRDMAMQVCEEYVKVTEKLGIPYVFKASFDKANRSSVTSYRGPGLEEGMRIFQDIKQAFGVPIITDVHEPEQAAVVAEVCDIIQLPAFLSRQTDLVVAMAKTGAVINIKKAQFLAPQEMKHILNKCVEAGNDQLILCERGSSFGYNNLVVDMLGFGIMKQFEYPVFFDVTHALQMPGGRADSAGGRRAQVLDLAKAGISQSLAGLFLEAHPDPDNAKCDGPCALRLDKLEPFLAQLKQLDELVKSFPTVETA.

The protein belongs to the KdsA family.

The protein resides in the cytoplasm. It catalyses the reaction D-arabinose 5-phosphate + phosphoenolpyruvate + H2O = 3-deoxy-alpha-D-manno-2-octulosonate-8-phosphate + phosphate. It participates in carbohydrate biosynthesis; 3-deoxy-D-manno-octulosonate biosynthesis; 3-deoxy-D-manno-octulosonate from D-ribulose 5-phosphate: step 2/3. It functions in the pathway bacterial outer membrane biogenesis; lipopolysaccharide biosynthesis. This chain is 2-dehydro-3-deoxyphosphooctonate aldolase, found in Pseudomonas fluorescens (strain SBW25).